The chain runs to 291 residues: Zinc transporter ZupT (291 aa).

8 helical membrane-spanning segments follow: residues 8 to 28, 39 to 59, 74 to 94, 147 to 167, 174 to 194, 209 to 229, 233 to 253, and 271 to 291; these read IFIAMLLTLFAGFSTAIGSII, VLSLGLGFSAGVMIYISFMEI, HWAELLGLACFFGGILISLLI, GIFTALAIAIHNFPEGFATFI, TLGIAIAIAVAIHNIPEGLAV, FIYSALSGFAEPLGAFVGALI, FIGDLTLAISFAVIAGIMVFI, and SLYGLIAGMAIMALSLNLLGQ. Fe(2+) is bound by residues N158 and E161. Positions 161 and 186 each coordinate Zn(2+). 3 residues coordinate Fe(2+): N187, E190, and E219. Residue E190 participates in Zn(2+) binding.

The protein belongs to the ZIP transporter (TC 2.A.5) family. ZupT subfamily.

It is found in the cell inner membrane. It carries out the reaction Zn(2+)(in) = Zn(2+)(out). Mediates zinc uptake. May also transport other divalent cations. This Campylobacter jejuni subsp. jejuni serotype O:2 (strain ATCC 700819 / NCTC 11168) protein is Zinc transporter ZupT.